A 627-amino-acid polypeptide reads, in one-letter code: Membrane protein insertase YidC (627 aa).

The chain crosses the membrane as a helical span at residues 8 to 28 (LFLALILSMGIWMGVNYFFFP). Polar residues predominate over residues 33-57 (KKNTETKQTQSDKTSENTKQQITSG). The segment at 33-68 (KKNTETKQTQSDKTSENTKQQITSGKTKESNSADPV) is disordered. The span at 58 to 68 (KTKESNSADPV) shows a compositional bias: basic and acidic residues. 4 consecutive transmembrane segments (helical) span residues 417–437 (FTIP…KLVF), 488–508 (VGGC…YTAF), 536–556 (AIPY…LMVG), and 575–595 (MLMY…PSGV).

It belongs to the OXA1/ALB3/YidC family. Type 1 subfamily. Interacts with the Sec translocase complex via SecD. Specifically interacts with transmembrane segments of nascent integral membrane proteins during membrane integration.

Its subcellular location is the cell inner membrane. Functionally, required for the insertion and/or proper folding and/or complex formation of integral membrane proteins into the membrane. Involved in integration of membrane proteins that insert both dependently and independently of the Sec translocase complex, as well as at least some lipoproteins. Aids folding of multispanning membrane proteins. The protein is Membrane protein insertase YidC of Leptospira interrogans serogroup Icterohaemorrhagiae serovar Lai (strain 56601).